We begin with the raw amino-acid sequence, 192 residues long: Small ribosomal subunit protein uS5 (192 aa).

The region spanning 22 to 85 (LVDKLVTINR…DRAKRAMIRV (64 aa)) is the S5 DRBM domain.

This sequence belongs to the universal ribosomal protein uS5 family. Part of the 30S ribosomal subunit. Contacts proteins S4 and S8.

Its function is as follows. With S4 and S12 plays an important role in translational accuracy. Located at the back of the 30S subunit body where it stabilizes the conformation of the head with respect to the body. In Gluconacetobacter diazotrophicus (strain ATCC 49037 / DSM 5601 / CCUG 37298 / CIP 103539 / LMG 7603 / PAl5), this protein is Small ribosomal subunit protein uS5.